A 312-amino-acid polypeptide reads, in one-letter code: Glycine--tRNA ligase alpha subunit (312 aa).

The protein belongs to the class-II aminoacyl-tRNA synthetase family. In terms of assembly, tetramer of two alpha and two beta subunits.

The protein localises to the cytoplasm. It carries out the reaction tRNA(Gly) + glycine + ATP = glycyl-tRNA(Gly) + AMP + diphosphate. The polypeptide is Glycine--tRNA ligase alpha subunit (Methylobacillus flagellatus (strain ATCC 51484 / DSM 6875 / VKM B-1610 / KT)).